Reading from the N-terminus, the 245-residue chain is tRNA pseudouridine synthase A 2 (245 aa).

The active-site Nucleophile is Asp-53. Tyr-111 contacts substrate.

The protein belongs to the tRNA pseudouridine synthase TruA family. In terms of assembly, homodimer.

The catalysed reaction is uridine(38/39/40) in tRNA = pseudouridine(38/39/40) in tRNA. Functionally, formation of pseudouridine at positions 38, 39 and 40 in the anticodon stem and loop of transfer RNAs. This is tRNA pseudouridine synthase A 2 from Bacillus cereus (strain ATCC 14579 / DSM 31 / CCUG 7414 / JCM 2152 / NBRC 15305 / NCIMB 9373 / NCTC 2599 / NRRL B-3711).